The chain runs to 149 residues: Transcriptional regulator MraZ (149 aa).

SpoVT-AbrB domains follow at residues 6–52 and 81–124; these read RSYR…TPED and VEEL…SEEE.

This sequence belongs to the MraZ family. In terms of assembly, forms oligomers.

The protein resides in the cytoplasm. The protein localises to the nucleoid. The sequence is that of Transcriptional regulator MraZ from Oleidesulfovibrio alaskensis (strain ATCC BAA-1058 / DSM 17464 / G20) (Desulfovibrio alaskensis).